Reading from the N-terminus, the 476-residue chain is MSIRTPPRLLELAGRSLLRDQALAMSTLEELPTELFPPLFMEAFSRRRCEALKLMVQAWPFRRLPLRPLIKMPCLEAFQAVLDGLDALLTQGVHPRRWKLQVLDLQDVCENFWMVWSEAMARGCFLNAKRNKTPVQDCPRMRGQQPLTVFVELWLKNRTLDEYLTCLLLWVKQRKDLLHLCCKKLKILGMPFRNIRSILKMVNLDCIQEVEVNCKWVLPILTQFTPYLGHMRNLQKLVLSHMDVSRYVSPEQKKEIVTQFTTQFLKLCCLQKLSMNSVSFLEGHLDQLLSCLKTSLKVLTITNCVLLESDLKHLSQCPSISQLKTLDLSGIRLTNYSLVPLQILLEKVAATLEYLDLDDCGIIDSQVNAILPALSRCFELNTFSFCGNPISMATLENLLSHTIILKNLCVELYPAPRESYDADGTLCWSRFAQIRAELMKRVRDLRHPKRILFCTDCCPDCGNRSFYDLEADQCCC.

One copy of the LRR 1; degenerate repeat lies at 97 to 124; sequence RWKLQVLDLQDVCENFWMVWSEAMARGC. The stretch at 179–203 is one LRR 2; degenerate repeat; that stretch reads HLCCKKLKILGMPFRNIRSILKMVN. Residues 204–230 form an LRR 3; degenerate repeat; that stretch reads LDCIQEVEVNCKWVLPILTQFTPYLGH. The LRR 4; degenerate repeat unit spans residues 231-266; the sequence is MRNLQKLVLSHMDVSRYVSPEQKKEIVTQFTTQFLK. LRR repeat units lie at residues 267 to 292, 293 to 324, 325 to 345, 349 to 376, and 377 to 401; these read LCCL…LSCL, KTSL…SQLK, TLDL…QILL, AATL…ALSR, and CFEL…LLSH.

The protein belongs to the PRAME family. Component of a CRL2 E3 ubiquitin-protein ligase complex, also named ECS (Elongin BC-CUL2/5-SOCS-box protein) complex, composed of CUL2, Elongin BC (ELOB and ELOC), RBX1 and substrate-specific adapter PRAMEF6.

It functions in the pathway protein modification; protein ubiquitination. In terms of biological role, substrate-recognition component of a Cul2-RING (CRL2) E3 ubiquitin-protein ligase complex, which mediates ubiquitination of target proteins, leading to their degradation. The CRL2(PRAMEF6) complex mediates ubiquitination and degradation of truncated MSRB1/SEPX1 selenoproteins produced by failed UGA/Sec decoding. This Homo sapiens (Human) protein is PRAME family member 6.